The primary structure comprises 347 residues: Heat-inducible transcription repressor HrcA (347 aa).

Belongs to the HrcA family.

Its function is as follows. Negative regulator of class I heat shock genes (grpE-dnaK-dnaJ and groELS operons). Prevents heat-shock induction of these operons. This chain is Heat-inducible transcription repressor HrcA, found in Sphingopyxis alaskensis (strain DSM 13593 / LMG 18877 / RB2256) (Sphingomonas alaskensis).